We begin with the raw amino-acid sequence, 708 residues long: MDNNNAFQLSFDEQHYAWLAIDVPGEKMNTLQAAFAEEMQAVFATLNEKRGQIKGLIIHSLKPDNFIAGADVRMLEACQSVHEAQALASQGQQMFQQLADLPFPVVAAIHGPCLGGGLELALACDYRVCTEDEVTRLGLPEVMLGLLPGSGGTQRLPRLIGLLPALDLILTGKQLRAKKAKKLGVVDACVPHSVLLDVAKRLLEEKGHKKRAQVTLPIKEKLLANTGLGRKLIFDQAAKKTQQKTRGNYPAAQAILEVIQYGLEKGMHAGLEYEAKRFAELVMTRESKALRSIFFATTEMKKDLGADAKPAPVAAVGVLGGGLMGAGISHVTVAKAKTSVRIKDVANDGVLNALNYNYKLFDKQRQRKILTKAQLQAQMSQLSGGTGFVGFDRCDVVIEAVFEDLKLKQQMVADIEANAKPTTIFATNTSSLPIHQIASQAQRPQNIVGLHYFSPVEKMPLVEVIPHATTSDETIATVVTLARKQGKTPIVVKDCAGFYVNRILAPYMNEAAQVLMAGEPIEKLDAALLDFGFPVGPITLLDEVGVDIGAKIMPILVKELGPRFQGPDVFDVLLKDNRKGRKSGKGFYTYKGSKKKEVDKSVYKLLKLTPESKLNDKEIAMRCLLPMLNEAVRCLDEGIIRSARDGDMGAIFGIGFPPFLGGPFRYMDTLGLTKVVEMMNQHTEKYGERFAPCDGLLTRAGLGEKFYP.

Residues 1 to 191 are enoyl-CoA hydratase; the sequence is MDNNNAFQLS…KLGVVDACVP (191 aa). The segment at 311-708 is 3-hydroxyacyl-CoA dehydrogenase; the sequence is APVAAVGVLG…RAGLGEKFYP (398 aa).

The protein in the N-terminal section; belongs to the enoyl-CoA hydratase/isomerase family. It in the central section; belongs to the 3-hydroxyacyl-CoA dehydrogenase family. As to quaternary structure, heterotetramer of two alpha chains (FadJ) and two beta chains (FadI).

The protein localises to the cytoplasm. It catalyses the reaction a (3S)-3-hydroxyacyl-CoA = a (2E)-enoyl-CoA + H2O. The enzyme catalyses a 4-saturated-(3S)-3-hydroxyacyl-CoA = a (3E)-enoyl-CoA + H2O. It carries out the reaction a (3S)-3-hydroxyacyl-CoA + NAD(+) = a 3-oxoacyl-CoA + NADH + H(+). The catalysed reaction is (3S)-3-hydroxybutanoyl-CoA = (3R)-3-hydroxybutanoyl-CoA. It functions in the pathway lipid metabolism; fatty acid beta-oxidation. Functionally, catalyzes the formation of a hydroxyacyl-CoA by addition of water on enoyl-CoA. Also exhibits 3-hydroxyacyl-CoA epimerase and 3-hydroxyacyl-CoA dehydrogenase activities. In Vibrio cholerae serotype O1 (strain ATCC 39541 / Classical Ogawa 395 / O395), this protein is Fatty acid oxidation complex subunit alpha.